The chain runs to 155 residues: 2-C-methyl-D-erythritol 2,4-cyclodiphosphate synthase (155 aa).

2 residues coordinate a divalent metal cation: aspartate 8 and histidine 10. Residues 8-10 (DVH) and 34-35 (HS) each bind 4-CDP-2-C-methyl-D-erythritol 2-phosphate. Residue histidine 42 participates in a divalent metal cation binding. 4-CDP-2-C-methyl-D-erythritol 2-phosphate contacts are provided by residues 56–58 (DIG), 61–65 (FPDKD), 132–135 (TTTE), and arginine 142.

The protein belongs to the IspF family. In terms of assembly, homotrimer. A divalent metal cation serves as cofactor.

It carries out the reaction 4-CDP-2-C-methyl-D-erythritol 2-phosphate = 2-C-methyl-D-erythritol 2,4-cyclic diphosphate + CMP. The protein operates within isoprenoid biosynthesis; isopentenyl diphosphate biosynthesis via DXP pathway; isopentenyl diphosphate from 1-deoxy-D-xylulose 5-phosphate: step 4/6. Involved in the biosynthesis of isopentenyl diphosphate (IPP) and dimethylallyl diphosphate (DMAPP), two major building blocks of isoprenoid compounds. Catalyzes the conversion of 4-diphosphocytidyl-2-C-methyl-D-erythritol 2-phosphate (CDP-ME2P) to 2-C-methyl-D-erythritol 2,4-cyclodiphosphate (ME-CPP) with a corresponding release of cytidine 5-monophosphate (CMP). This chain is 2-C-methyl-D-erythritol 2,4-cyclodiphosphate synthase, found in Desulfatibacillum aliphaticivorans.